Here is a 64-residue protein sequence, read N- to C-terminus: Prokaryotic ubiquitin-like protein Pup (64 aa).

The segment covering 1–11 has biased composition (basic and acidic residues); sequence MAQEQTKRTGG. Positions 1 to 37 are disordered; sequence MAQEQTKRTGGGDEDDTPGADGAAGQERREKLAEDTD. An ARC ATPase binding region spans residues 21-58; that stretch reads DGAAGQERREKLAEDTDDLLDEIDDVLEENAEDFVRAY. A coiled-coil region spans residues 24–52; the sequence is AGQERREKLAEDTDDLLDEIDDVLEENAE. Glutamine 64 is subject to Deamidated glutamine. Glutamine 64 participates in a covalent cross-link: Isoglutamyl lysine isopeptide (Gln-Lys) (interchain with K-? in acceptor proteins).

It belongs to the prokaryotic ubiquitin-like protein family. As to quaternary structure, strongly interacts with the proteasome-associated ATPase ARC through a hydrophobic interface; the interacting region of Pup lies in its C-terminal half. There is one Pup binding site per ARC hexamer ring. Is modified by deamidation of its C-terminal glutamine to glutamate by the deamidase Dop, a prerequisite to the subsequent pupylation process.

The protein operates within protein degradation; proteasomal Pup-dependent pathway. Functionally, protein modifier that is covalently attached to lysine residues of substrate proteins, thereby targeting them for proteasomal degradation. The tagging system is termed pupylation. The polypeptide is Prokaryotic ubiquitin-like protein Pup (Rhodococcus jostii (strain RHA1)).